We begin with the raw amino-acid sequence, 314 residues long: Olfactory receptor 5B17 (314 aa).

The Extracellular segment spans residues 1 to 23; sequence MENNTEVSEFILLGLTNAPELQV. An N-linked (GlcNAc...) asparagine glycan is attached at asparagine 3. Residues 24–44 form a helical membrane-spanning segment; sequence PLFIMFTLIYLITLTGNLGMI. At 45–52 the chain is on the cytoplasmic side; the sequence is ILILLDSH. The helical transmembrane segment at 53–73 threads the bilayer; it reads LHTPMYFFLSNLSLAGIGYSS. At 74–97 the chain is on the extracellular side; the sequence is AVTPKVLTGLLIEDKAISYSACAA. Residues cysteine 95 and cysteine 187 are joined by a disulfide bond. The helical transmembrane segment at 98–118 threads the bilayer; that stretch reads QMFFCAVFATVENYLLSSMAY. The Cytoplasmic portion of the chain corresponds to 119–137; sequence DRYAAVCNPLHYTTTMTTR. The chain crosses the membrane as a helical span at residues 138–158; it reads VCACLAIGCYVIGFLNASIQI. Residues 159–194 lie on the Extracellular side of the membrane; the sequence is GDTFRLSFCMSNVIHHFFCDKPAVITLTCSEKHISE. Residues 195 to 215 traverse the membrane as a helical segment; sequence LILVLISSFNVFFALLVTLIS. At 216–235 the chain is on the cytoplasmic side; sequence YLFILITILKRHTGKGYQKP. Residues 236 to 256 form a helical membrane-spanning segment; sequence LSTCGSHLIAIFLFYITVIIM. The Extracellular portion of the chain corresponds to 257 to 269; the sequence is YIRPSSSHSMDTD. The helical transmembrane segment at 270-290 threads the bilayer; that stretch reads KIASVFYTMIIPMLSPIVYTL. At 291–314 the chain is on the cytoplasmic side; sequence RNKDVKNAFMKVVEKAKYSLDSVF.

It belongs to the G-protein coupled receptor 1 family.

The protein localises to the cell membrane. Its function is as follows. Odorant receptor. The sequence is that of Olfactory receptor 5B17 (OR5B17) from Homo sapiens (Human).